The chain runs to 462 residues: Retinoic acid receptor RXR-alpha (462 aa).

The disordered stretch occupies residues 1–107 (MDTKHFLPLD…MNPVSSSEDI (107 aa)). Residues 1–134 (MDTKHFLPLD…GNMASFTKHI (134 aa)) are modulating. A Glycyl lysine isopeptide (Lys-Gly) (interchain with G-Cter in SUMO2) cross-link involves residue K4. The segment covering 11–24 (FSTQVNSSLTSPTG) has biased composition (polar residues). Phosphoserine occurs at positions 21 and 27. Residues 49 to 58 (SPISTLSSPI) are compositionally biased toward polar residues. Phosphoserine; by MAPK8 and MAPK9 is present on residues S56 and S70. The span at 78–104 (SVPTTPTLGFSTGSPQLSSPMNPVSSS) shows a compositional bias: polar residues. Phosphothreonine; by MAPK8 and MAPK9 is present on T82. K108 participates in a covalent cross-link: Glycyl lysine isopeptide (Lys-Gly) (interchain with G-Cter in SUMO). The residue at position 129 (S129) is a Phosphoserine. 2 residues coordinate Zn(2+): C135 and C138. The segment at 135–155 (CAICGDRSSGKHYGVYSCEGC) adopts an NR C4-type zinc-finger fold. Residues 135-200 (CAICGDRSSG…RYQKCLAMGM (66 aa)) constitute a DNA-binding region (nuclear receptor). N6-acetyllysine; by EP300 is present on K145. Residues C152 and C155 each coordinate Zn(2+). Residues 160–165 (KRTVRK) form a nuclear localization signal region. Positions 171, 177, 187, and 190 each coordinate Zn(2+). An NR C4-type zinc finger spans residues 171–195 (CRDNKDCLIDKRQRNRCQYCRYQKC). Residues 201 to 224 (KREAVQEERQRGKDRNENEVESTS) form a hinge region. Residues 206–218 (QEERQRGKDRNEN) show a composition bias toward basic and acidic residues. The tract at residues 206–228 (QEERQRGKDRNENEVESTSSANE) is disordered. Positions 227-458 (NEDMPVERIL…TFLMEMLEAP (232 aa)) constitute an NR LBD domain. At S259 the chain carries Phosphoserine. A Phosphoserine; by MAPK8 and MAPK9 modification is found at S260. Positions 316 and 327 each coordinate 9-cis-retinoate. R316 and A327 together coordinate all-trans-retinoate. A required for nuclear export region spans residues 348–368 (RVLTELVSKMRDMQMDKTELG).

This sequence belongs to the nuclear hormone receptor family. NR2 subfamily. As to quaternary structure, homodimer. Heterodimer (via C-terminus) with RARA; required for ligand-dependent retinoic acid receptor transcriptional activity; association with RARA is enhanced by pulsatile shear stress. Heterodimer with PPARA (via the leucine-like zipper in the LBD); the interaction is required for PPARA transcriptional activity. Heterodimerizes with PPARG. Heterodimerizes (via NR LBD) with RARB. Heterodimerizes with NR1H4; the heterodimerization enhances the binding affinity for LXXLL motifs from coactivators. Interacts with NCOA3 and NCOA6 coactivators. Interacts with coactivator FAM120B. Interacts with coactivator PELP1, SENP6, SFPQ, DNTTIP2 and RNF8. Interacts with PRMT2. Interacts with ASXL1. Interacts with BHLHE40/DEC1, BHLHE41/DEC2, NCOR1 and NCOR2. Interacts in a ligand-dependent fashion with MED1 and NCOA1. Interacts with VDR. Interacts with EP300; the interaction is decreased by 9-cis retinoic acid. Heterodimer (via C-terminus) with NR4A1 (via DNA-binding domain); DNA-binding of the heterodimer is enhanced by 9-cis retinoic acid. NR4A1 competes with EP300 for interaction with RXRA and thereby attenuates EP300 mediated acetylation of RXRA. In the absence of hormonal ligand, interacts with TACC1. Interacts ith IGFBP3. In terms of assembly, (Microbial infection) Interacts (via the DNA binding domain) with HCV core protein; the interaction enhances the transcriptional activities of the RXRA/RARA and the RXRA/PPARA heterodimers. Acetylated by EP300; acetylation enhances DNA binding and transcriptional activity. In terms of processing, phosphorylated on serine and threonine residues mainly in the N-terminal modulating domain. Constitutively phosphorylated on Ser-21 in the presence or absence of ligand. Under stress conditions, hyperphosphorylated by activated JNK on Ser-56, Ser-70, Thr-82 and Ser-260. Phosphorylated on Ser-27, in vitro, by PKA. This phosphorylation is required for repression of cAMP-mediated transcriptional activity of RARA. Post-translationally, ubiquitinated by UBR5, leading to its degradation: UBR5 specifically recognizes and binds ligand-bound RXRA when it is not associated with coactivators (NCOAs). In presence of NCOAs, the UBR5-degron is not accessible, preventing its ubiquitination and degradation. Sumoylation negatively regulates transcriptional activity. Desumoylated specifically by SENP6. In terms of tissue distribution, expressed in lung fibroblasts (at protein level). Expressed in monocytes. Highly expressed in liver, also found in kidney and brain.

It localises to the nucleus. The protein resides in the cytoplasm. The protein localises to the mitochondrion. In terms of biological role, receptor for retinoic acid that acts as a transcription factor. Forms homo- or heterodimers with retinoic acid receptors (RARs) and binds to target response elements in response to their ligands, all-trans or 9-cis retinoic acid, to regulate gene expression in various biological processes. The RAR/RXR heterodimers bind to the retinoic acid response elements (RARE) composed of tandem 5'-AGGTCA-3' sites known as DR1-DR5 to regulate transcription. The high affinity ligand for retinoid X receptors (RXRs) is 9-cis retinoic acid. In the absence of ligand, the RXR-RAR heterodimers associate with a multiprotein complex containing transcription corepressors that induce histone deacetylation, chromatin condensation and transcriptional suppression. On ligand binding, the corepressors dissociate from the receptors and coactivators are recruited leading to transcriptional activation. Serves as a common heterodimeric partner for a number of nuclear receptors, such as RARA, RARB and PPARA. The RXRA/RARB heterodimer can act as a transcriptional repressor or transcriptional activator, depending on the RARE DNA element context. The RXRA/PPARA heterodimer is required for PPARA transcriptional activity on fatty acid oxidation genes such as ACOX1 and the P450 system genes. Together with RARA, positively regulates microRNA-10a expression, thereby inhibiting the GATA6/VCAM1 signaling response to pulsatile shear stress in vascular endothelial cells. Acts as an enhancer of RARA binding to RARE DNA element. May facilitate the nuclear import of heterodimerization partners such as VDR and NR4A1. Promotes myelin debris phagocytosis and remyelination by macrophages. Plays a role in the attenuation of the innate immune system in response to viral infections, possibly by negatively regulating the transcription of antiviral genes such as type I IFN genes. Involved in the regulation of calcium signaling by repressing ITPR2 gene expression, thereby controlling cellular senescence. The sequence is that of Retinoic acid receptor RXR-alpha (RXRA) from Homo sapiens (Human).